Here is a 401-residue protein sequence, read N- to C-terminus: Tetracycline resistance protein, class B (401 aa).

The Cytoplasmic segment spans residues 1 to 6; it reads MNSSTK. A helical transmembrane segment spans residues 7–30; sequence IALVITLLDAMGIGLIMPVLPTLL. Residues 31-42 are Periplasmic-facing; that stretch reads REFIASEDIANH. The helical transmembrane segment at 43–61 threads the bilayer; that stretch reads FGVLLALYALMQVIFAPWL. Over 62–71 the chain is Cytoplasmic; it reads GKMSDRFGRR. The helical transmembrane segment at 72–91 threads the bilayer; that stretch reads PVLLLSLIGASLDYLLLAFS. Residues 92–98 are Periplasmic-facing; the sequence is SALWMLY. A helical membrane pass occupies residues 99-119; the sequence is LGRLLSGITGATGAVAASVIA. At 120–129 the chain is on the cytoplasmic side; sequence DTTSASQRVK. The chain crosses the membrane as a helical span at residues 130–152; sequence WFGWLGASFGLGLIAGPIIGGFA. The Periplasmic segment spans residues 153 to 158; sequence GEISPH. Residues 159–178 form a helical membrane-spanning segment; sequence SPFFIAALLNIVTFLVVMFW. At 179–211 the chain is on the cytoplasmic side; that stretch reads FRETKNTRDNTDTEVGVETQSNSVYITLFKTMP. Residues 212–232 traverse the membrane as a helical segment; that stretch reads ILLIIYFSAQLIGQIPATVWV. Over 233–243 the chain is Periplasmic; the sequence is LFTENRFGWNS. Residues 244–265 traverse the membrane as a helical segment; that stretch reads MMVGFSLAGLGLLHSVFQAFVA. Topologically, residues 266 to 275 are cytoplasmic; it reads GRIATKWGEK. A helical membrane pass occupies residues 276-295; sequence TAVLLGFIADSSAFAFLAFI. Over 296–298 the chain is Periplasmic; the sequence is SEG. A helical membrane pass occupies residues 299–322; it reads WLVFPVLILLAGGGIALPALQGVM. Over 323–332 the chain is Cytoplasmic; it reads SIQTKSHQQG. A helical transmembrane segment spans residues 333-356; that stretch reads ALQGLLVSLTNATGVIGPLLFAVI. At 357 to 365 the chain is on the periplasmic side; the sequence is YNHSLPIWD. A helical transmembrane segment spans residues 366–387; sequence GWIWIIGLAFYCIIILLSMTFM. Residues 388-401 lie on the Cytoplasmic side of the membrane; that stretch reads LTPQAQGSKQETSA.

It belongs to the major facilitator superfamily. TCR/Tet family.

The protein localises to the cell inner membrane. In terms of biological role, resistance to tetracycline by an active tetracycline efflux. This is an energy-dependent process that decreases the accumulation of the antibiotic in whole cells. This protein functions as a metal-tetracycline/H(+) antiporter. This Escherichia coli protein is Tetracycline resistance protein, class B (tetA).